We begin with the raw amino-acid sequence, 259 residues long: Global transcriptional regulator CodY (259 aa).

Residues 1–155 (MALLQKTRII…GATVVGMEIL (155 aa)) are GAF domain. The H-T-H motif DNA-binding region spans 203–222 (ASKIADRVGITRSVIVNALR). S215 is modified (phosphoserine).

Belongs to the CodY family.

It localises to the cytoplasm. Functionally, DNA-binding global transcriptional regulator which is involved in the adaptive response to starvation and acts by directly or indirectly controlling the expression of numerous genes in response to nutrient availability. During rapid exponential growth, CodY is highly active and represses genes whose products allow adaptation to nutrient depletion. The protein is Global transcriptional regulator CodY of Bacillus pumilus (strain SAFR-032).